The sequence spans 224 residues: Cytidylate kinase (224 aa).

11 to 19 provides a ligand contact to ATP; the sequence is GPAGAGKST.

It belongs to the cytidylate kinase family. Type 1 subfamily.

The protein localises to the cytoplasm. The enzyme catalyses CMP + ATP = CDP + ADP. It carries out the reaction dCMP + ATP = dCDP + ADP. This chain is Cytidylate kinase, found in Lysinibacillus sphaericus (strain C3-41).